The sequence spans 402 residues: Meiosis-specific cyclin rem1 (402 aa).

This sequence belongs to the cyclin family. Cyclin AB subfamily.

Its function is as follows. Required for pre-meiotic DNA synthesis and S phase progression. Regulates levels of meiotic intragenic recombination. The sequence is that of Meiosis-specific cyclin rem1 (rem1) from Schizosaccharomyces pombe (strain 972 / ATCC 24843) (Fission yeast).